A 606-amino-acid chain; its full sequence is Membrane protein insertase YidC (606 aa).

A helical transmembrane segment spans residues 8–28 (LILATALSFLVILVWFLLFPP). Over residues 59–78 (TEAAPGAAPQTAATPTENAP) the composition is skewed to low complexity. The segment at 59–79 (TEAAPGAAPQTAATPTENAPR) is disordered. Transmembrane regions (helical) follow at residues 378–398 (MGVAIIVLTLLIKALLLPLAW), 448–468 (LPILLQIPIFFSLYKVIFVTI), 506–526 (SILALIFIGILPLLLGISMWL), and 542–562 (IFAWLPWVFMFMLGTFASGLI).

The protein belongs to the OXA1/ALB3/YidC family. Type 1 subfamily. As to quaternary structure, interacts with the Sec translocase complex via SecD. Specifically interacts with transmembrane segments of nascent integral membrane proteins during membrane integration.

It is found in the cell inner membrane. In terms of biological role, required for the insertion and/or proper folding and/or complex formation of integral membrane proteins into the membrane. Involved in integration of membrane proteins that insert both dependently and independently of the Sec translocase complex, as well as at least some lipoproteins. Aids folding of multispanning membrane proteins. This chain is Membrane protein insertase YidC, found in Dinoroseobacter shibae (strain DSM 16493 / NCIMB 14021 / DFL 12).